We begin with the raw amino-acid sequence, 346 residues long: UDP-N-acetylenolpyruvoylglucosamine reductase (346 aa).

In terms of domain architecture, FAD-binding PCMH-type spans leucine 18–histidine 189. The active site involves arginine 165. The active-site Proton donor is the serine 240. The active site involves glutamate 336.

This sequence belongs to the MurB family. The cofactor is FAD.

The protein resides in the cytoplasm. It catalyses the reaction UDP-N-acetyl-alpha-D-muramate + NADP(+) = UDP-N-acetyl-3-O-(1-carboxyvinyl)-alpha-D-glucosamine + NADPH + H(+). The protein operates within cell wall biogenesis; peptidoglycan biosynthesis. Its function is as follows. Cell wall formation. The polypeptide is UDP-N-acetylenolpyruvoylglucosamine reductase (Neisseria meningitidis serogroup A / serotype 4A (strain DSM 15465 / Z2491)).